Reading from the N-terminus, the 190-residue chain is Probable RNA-binding protein 18 (190 aa).

The RRM domain occupies 25–106 (HRLWIGNLDP…KKLVVRWAHA (82 aa)). Residues 166-190 (VYSYFKPPDKKRTTPYSRTAWKSRR) are disordered.

This Mus musculus (Mouse) protein is Probable RNA-binding protein 18 (Rbm18).